The sequence spans 352 residues: Nicotinate-nucleotide--dimethylbenzimidazole phosphoribosyltransferase (352 aa).

Glu318 (proton acceptor) is an active-site residue.

The protein belongs to the CobT family.

The catalysed reaction is 5,6-dimethylbenzimidazole + nicotinate beta-D-ribonucleotide = alpha-ribazole 5'-phosphate + nicotinate + H(+). It participates in nucleoside biosynthesis; alpha-ribazole biosynthesis; alpha-ribazole from 5,6-dimethylbenzimidazole: step 1/2. In terms of biological role, catalyzes the synthesis of alpha-ribazole-5'-phosphate from nicotinate mononucleotide (NAMN) and 5,6-dimethylbenzimidazole (DMB). The protein is Nicotinate-nucleotide--dimethylbenzimidazole phosphoribosyltransferase of Geobacter sulfurreducens (strain ATCC 51573 / DSM 12127 / PCA).